The primary structure comprises 384 residues: Heparin lyase I (384 aa).

A signal peptide spans 1–21; the sequence is MKKQILYLIVLQQLFLCSAYA. At glutamine 22 the chain carries Blocked amino end (Gln). Serine 39 is a glycosylation site (O-linked (Man...) serine).

Monomer. In terms of processing, the N-terminus is blocked.

It is found in the periplasm. The catalysed reaction is Eliminative cleavage of polysaccharides containing (1-&gt;4)-linked D-glucuronate or L-iduronate residues and (1-&gt;4)-alpha-linked 2-sulfoamino-2-deoxy-6-sulfo-D-glucose residues to give oligosaccharides with terminal 4-deoxy-alpha-D-gluc-4-enuronosyl groups at their non-reducing ends.. Its function is as follows. Degrades heparin and heparan sulfate. Also implicated in the release of heparin-bound growth factors from the extracellular matrix. This chain is Heparin lyase I, found in Pedobacter heparinus (Flavobacterium heparinum).